We begin with the raw amino-acid sequence, 386 residues long: Epoxyqueuosine reductase (386 aa).

Residues Arg57, Cys97, Asp134, 139–141, Ser152, Asn155, Ile158, and Leu169 contribute to the cob(II)alamin site; that span reads SDR. Asp134 acts as the Proton donor in catalysis. Residues 178-208 enclose the 4Fe-4S ferredoxin-type domain; sequence FEPDVPIEDMCGSCTKCLDACPTGALVNPGQ. 5 residues coordinate [4Fe-4S] cluster: Cys188, Cys191, Cys194, Cys198, and Cys214. Ser216 serves as a coordination point for cob(II)alamin. Residues Gln220 and Lys222 each contribute to the tRNA site. [4Fe-4S] cluster contacts are provided by Cys240, Cys243, and Cys247. Cob(II)alamin is bound at residue 240-241; the sequence is CD. Residues Asn280, Arg281, Arg295, Lys297, and Lys298 each contribute to the tRNA site. The HEAT-like PBS-type repeat unit spans residues 333–357; the sequence is RGTAAWAIGKIGDPAYAEELEKALE.

Belongs to the QueG family. As to quaternary structure, monomer. It depends on cob(II)alamin as a cofactor. [4Fe-4S] cluster is required as a cofactor.

Its subcellular location is the cytoplasm. It carries out the reaction epoxyqueuosine(34) in tRNA + AH2 = queuosine(34) in tRNA + A + H2O. Its pathway is tRNA modification; tRNA-queuosine biosynthesis. Its function is as follows. Catalyzes the conversion of epoxyqueuosine (oQ) to queuosine (Q), which is a hypermodified base found in the wobble positions of tRNA(Asp), tRNA(Asn), tRNA(His) and tRNA(Tyr). The polypeptide is Epoxyqueuosine reductase (Bacillus subtilis (strain 168)).